The primary structure comprises 491 residues: Ketol-acid reductoisomerase (NADP(+)) (491 aa).

Residues 15-208 (AQLGKCRFMG…GGHRAGVLES (194 aa)) form the KARI N-terminal Rossmann domain. NADP(+)-binding positions include 45–48 (CGAQ), arginine 68, arginine 76, serine 78, and 108–110 (DKQ). Histidine 132 is a catalytic residue. Residue glycine 158 coordinates NADP(+). KARI C-terminal knotted domains follow at residues 209 to 344 (SFVA…TAPQ) and 345 to 484 (YEGK…MTDM). 4 residues coordinate Mg(2+): aspartate 217, glutamate 221, glutamate 389, and glutamate 393. Substrate is bound at residue serine 414.

Belongs to the ketol-acid reductoisomerase family. It depends on Mg(2+) as a cofactor.

The enzyme catalyses (2R)-2,3-dihydroxy-3-methylbutanoate + NADP(+) = (2S)-2-acetolactate + NADPH + H(+). The catalysed reaction is (2R,3R)-2,3-dihydroxy-3-methylpentanoate + NADP(+) = (S)-2-ethyl-2-hydroxy-3-oxobutanoate + NADPH + H(+). It participates in amino-acid biosynthesis; L-isoleucine biosynthesis; L-isoleucine from 2-oxobutanoate: step 2/4. The protein operates within amino-acid biosynthesis; L-valine biosynthesis; L-valine from pyruvate: step 2/4. Involved in the biosynthesis of branched-chain amino acids (BCAA). Catalyzes an alkyl-migration followed by a ketol-acid reduction of (S)-2-acetolactate (S2AL) to yield (R)-2,3-dihydroxy-isovalerate. In the isomerase reaction, S2AL is rearranged via a Mg-dependent methyl migration to produce 3-hydroxy-3-methyl-2-ketobutyrate (HMKB). In the reductase reaction, this 2-ketoacid undergoes a metal-dependent reduction by NADPH to yield (R)-2,3-dihydroxy-isovalerate. This chain is Ketol-acid reductoisomerase (NADP(+)), found in Citrobacter koseri (strain ATCC BAA-895 / CDC 4225-83 / SGSC4696).